A 124-amino-acid polypeptide reads, in one-letter code: Small ribosomal subunit protein uS12c (124 aa).

2 disordered regions span residues 1–28 and 104–124; these read MPTI…QSCP and AAGV…KPKS. 2 stretches are compositionally biased toward basic residues: residues 11 to 20 and 109 to 124; these read ERRKIHKKTK and DRRK…KPKS.

The protein belongs to the universal ribosomal protein uS12 family. As to quaternary structure, part of the 30S ribosomal subunit.

Its subcellular location is the plastid. The protein resides in the chloroplast. Its function is as follows. With S4 and S5 plays an important role in translational accuracy. Located at the interface of the 30S and 50S subunits. This Pyropia yezoensis (Susabi-nori) protein is Small ribosomal subunit protein uS12c (rps12).